The chain runs to 102 residues: uncharacterized protein (102 aa).

This is an uncharacterized protein from Enterobacteria phage T4 (Bacteriophage T4).